Reading from the N-terminus, the 300-residue chain is Quinolinate synthase (300 aa).

Iminosuccinate contacts are provided by His-23 and Ser-40. Cys-85 contributes to the [4Fe-4S] cluster binding site. Iminosuccinate contacts are provided by residues 111-113 (YIN) and Ser-128. Cys-171 contributes to the [4Fe-4S] cluster binding site. Iminosuccinate-binding positions include 198-200 (HPE) and Thr-215. [4Fe-4S] cluster is bound at residue Cys-258.

It belongs to the quinolinate synthase family. Type 2 subfamily. [4Fe-4S] cluster serves as cofactor.

The protein localises to the cytoplasm. It carries out the reaction iminosuccinate + dihydroxyacetone phosphate = quinolinate + phosphate + 2 H2O + H(+). It functions in the pathway cofactor biosynthesis; NAD(+) biosynthesis; quinolinate from iminoaspartate: step 1/1. Catalyzes the condensation of iminoaspartate with dihydroxyacetone phosphate to form quinolinate. The polypeptide is Quinolinate synthase (Clostridium novyi (strain NT)).